The chain runs to 1400 residues: Tiny macrocysts protein C (1400 aa).

8 helical membrane passes run I59–Q79, I112–A132, F152–L172, A196–F216, F240–F260, S266–Y286, S296–N316, and T320–F340. Disordered regions lie at residues F367–T393 and E683–Y712. Residues E369–S386 are compositionally biased toward basic and acidic residues. 4 consecutive transmembrane segments (helical) span residues W726 to L746, T975 to F995, V1162 to V1182, and V1342 to F1362.

It localises to the membrane. This is Tiny macrocysts protein C (tmcC) from Dictyostelium discoideum (Social amoeba).